We begin with the raw amino-acid sequence, 120 residues long: Large ribosomal subunit protein eL8 (120 aa).

It belongs to the eukaryotic ribosomal protein eL8 family. Part of the 50S ribosomal subunit. Probably part of the RNase P complex.

Its subcellular location is the cytoplasm. Multifunctional RNA-binding protein that recognizes the K-turn motif in ribosomal RNA, the RNA component of RNase P, box H/ACA, box C/D and box C'/D' sRNAs. In Methanosarcina mazei (strain ATCC BAA-159 / DSM 3647 / Goe1 / Go1 / JCM 11833 / OCM 88) (Methanosarcina frisia), this protein is Large ribosomal subunit protein eL8.